The chain runs to 316 residues: Ribosomal RNA small subunit methyltransferase H (316 aa).

Residues 35–37 (AGH), Asp-55, Phe-84, Asp-105, and Gln-112 contribute to the S-adenosyl-L-methionine site.

The protein belongs to the methyltransferase superfamily. RsmH family.

The protein localises to the cytoplasm. The enzyme catalyses cytidine(1402) in 16S rRNA + S-adenosyl-L-methionine = N(4)-methylcytidine(1402) in 16S rRNA + S-adenosyl-L-homocysteine + H(+). Functionally, specifically methylates the N4 position of cytidine in position 1402 (C1402) of 16S rRNA. In Streptococcus uberis (strain ATCC BAA-854 / 0140J), this protein is Ribosomal RNA small subunit methyltransferase H.